The chain runs to 719 residues: UvrABC system protein B (719 aa).

Residues 49-435 enclose the Helicase ATP-binding domain; the sequence is RRINAGERDV…TGGEFVEQVI (387 aa). 62-69 serves as a coordination point for ATP; sequence GATGTGKS. The Beta-hairpin signature appears at 115–138; that stretch reads YYDYYQPEAYIAQTDTYIEKDSSI. A Helicase C-terminal domain is found at 453–606; the sequence is QIDDLIGEIR…QIAYNEANGI (154 aa). The interval 635 to 654 is disordered; it reads GGSGRNASRGRRAQGEPGRA. The UVR domain occupies 674–709; that stretch reads ADLIKDLTAQMMAAARDLQFELAARFRDEIADLKRE.

The protein belongs to the UvrB family. In terms of assembly, forms a heterotetramer with UvrA during the search for lesions. Interacts with UvrC in an incision complex.

Its subcellular location is the cytoplasm. The UvrABC repair system catalyzes the recognition and processing of DNA lesions. A damage recognition complex composed of 2 UvrA and 2 UvrB subunits scans DNA for abnormalities. Upon binding of the UvrA(2)B(2) complex to a putative damaged site, the DNA wraps around one UvrB monomer. DNA wrap is dependent on ATP binding by UvrB and probably causes local melting of the DNA helix, facilitating insertion of UvrB beta-hairpin between the DNA strands. Then UvrB probes one DNA strand for the presence of a lesion. If a lesion is found the UvrA subunits dissociate and the UvrB-DNA preincision complex is formed. This complex is subsequently bound by UvrC and the second UvrB is released. If no lesion is found, the DNA wraps around the other UvrB subunit that will check the other stand for damage. This Mycobacterium tuberculosis (strain CDC 1551 / Oshkosh) protein is UvrABC system protein B.